Reading from the N-terminus, the 496-residue chain is Alpha-amylase (496 aa).

The cysteines at positions 29 and 85 are disulfide-linked. Residues Asn99, Arg155, and Asp164 each contribute to the Ca(2+) site. Arg192 is a binding site for chloride. Asp194 acts as the Nucleophile in catalysis. Residue His198 participates in Ca(2+) binding. Glu230 serves as the catalytic Proton donor. Residue Arg332 coordinates chloride. 2 disulfides stabilise this stretch: Cys374–Cys380 and Cys448–Cys460.

This sequence belongs to the glycosyl hydrolase 13 family. Monomer. Ca(2+) is required as a cofactor. The cofactor is chloride. In terms of processing, disulfide bonds are present.

It localises to the secreted. It carries out the reaction Endohydrolysis of (1-&gt;4)-alpha-D-glucosidic linkages in polysaccharides containing three or more (1-&gt;4)-alpha-linked D-glucose units.. Inhibited by alpha-amylase inhibitors from wheat and rye. The most effective inhibitors are the wheat tetrameric alpha-amylase inhibitor (WTAI) and the rye dimeric alpha-amylase inhibitor (RDAI-1). Not inhibited by alpha-amylase inhibitor from barley. Aids in the digestion of starch and glycogen derived from food, such as skin scales, fungi and bacteria. This Dermatophagoides pteronyssinus (European house dust mite) protein is Alpha-amylase.